The following is a 194-amino-acid chain: Isopentenyl-diphosphate Delta-isomerase (194 aa).

Mn(2+)-binding residues include His23 and His30. Residues 28–162 form the Nudix hydrolase domain; it reads PLHLAFSCYV…TTDISPWCRQ (135 aa). The active site involves Cys65. Position 67 (His67) interacts with Mn(2+). Glu85 provides a ligand contact to Mg(2+). Glu112 and Glu114 together coordinate Mn(2+). Glu114 is a catalytic residue.

This sequence belongs to the IPP isomerase type 1 family. Mg(2+) is required as a cofactor. It depends on Mn(2+) as a cofactor.

The protein resides in the cytoplasm. It catalyses the reaction isopentenyl diphosphate = dimethylallyl diphosphate. It participates in isoprenoid biosynthesis; dimethylallyl diphosphate biosynthesis; dimethylallyl diphosphate from isopentenyl diphosphate: step 1/1. In terms of biological role, catalyzes the 1,3-allylic rearrangement of the homoallylic substrate isopentenyl (IPP) to its highly electrophilic allylic isomer, dimethylallyl diphosphate (DMAPP). This chain is Isopentenyl-diphosphate Delta-isomerase, found in Saccharopolyspora erythraea (strain ATCC 11635 / DSM 40517 / JCM 4748 / NBRC 13426 / NCIMB 8594 / NRRL 2338).